Consider the following 258-residue polypeptide: Imidazole glycerol phosphate synthase subunit HisF (258 aa).

Active-site residues include aspartate 11 and aspartate 130.

This sequence belongs to the HisA/HisF family. Heterodimer of HisH and HisF.

It is found in the cytoplasm. The catalysed reaction is 5-[(5-phospho-1-deoxy-D-ribulos-1-ylimino)methylamino]-1-(5-phospho-beta-D-ribosyl)imidazole-4-carboxamide + L-glutamine = D-erythro-1-(imidazol-4-yl)glycerol 3-phosphate + 5-amino-1-(5-phospho-beta-D-ribosyl)imidazole-4-carboxamide + L-glutamate + H(+). It participates in amino-acid biosynthesis; L-histidine biosynthesis; L-histidine from 5-phospho-alpha-D-ribose 1-diphosphate: step 5/9. IGPS catalyzes the conversion of PRFAR and glutamine to IGP, AICAR and glutamate. The HisF subunit catalyzes the cyclization activity that produces IGP and AICAR from PRFAR using the ammonia provided by the HisH subunit. The polypeptide is Imidazole glycerol phosphate synthase subunit HisF (Escherichia coli O6:K15:H31 (strain 536 / UPEC)).